Reading from the N-terminus, the 153-residue chain is Pheromone-binding protein Gp-9 (153 aa).

The N-terminal stretch at 1-19 (MKTFVLHIFIFALVAFASA) is a signal peptide. Disulfide bonds link cysteine 37/cysteine 77, cysteine 73/cysteine 129, and cysteine 118/cysteine 138.

The protein belongs to the PBP/GOBP family. Homodimer.

Its subcellular location is the secreted. In terms of biological role, colony queen number, a major feature of social organization, is associated with worker genotype for Gp-9. Colonies are headed by either a single reproductive queen (monogyne form) or multiple queens (polygyne form). Differences in worker Gp-9 genotypes between social forms may cause differences in workers' abilities to recognize queens and regulate their numbers. The polypeptide is Pheromone-binding protein Gp-9 (Solenopsis richteri (Black imported fire ant)).